Reading from the N-terminus, the 187-residue chain is Large ribosomal subunit protein uL6c (187 aa).

This sequence belongs to the universal ribosomal protein uL6 family. In terms of assembly, part of the 50S ribosomal subunit.

It localises to the plastid. The protein resides in the chloroplast. Functionally, binds 23S rRNA. The protein is Large ribosomal subunit protein uL6c (rpl6) of Thalassiosira pseudonana (Marine diatom).